Consider the following 362-residue polypeptide: Dihydroorotate dehydrogenase (quinone) (362 aa).

FMN is bound by residues 62-66 and Thr-86; that span reads AGYDK. Position 66 (Lys-66) interacts with substrate. 111–115 serves as a coordination point for substrate; that stretch reads NRLGF. FMN contacts are provided by Asn-139 and Asn-170. Asn-170 is a binding site for substrate. Ser-173 (nucleophile) is an active-site residue. Asn-175 serves as a coordination point for substrate. 2 residues coordinate FMN: Lys-215 and Ser-243. Substrate is bound at residue 244–245; that stretch reads NT. Residues Gly-266, Gly-295, and 316-317 contribute to the FMN site; that span reads YS.

Belongs to the dihydroorotate dehydrogenase family. Type 2 subfamily. In terms of assembly, monomer. FMN is required as a cofactor.

Its subcellular location is the cell membrane. It catalyses the reaction (S)-dihydroorotate + a quinone = orotate + a quinol. It functions in the pathway pyrimidine metabolism; UMP biosynthesis via de novo pathway; orotate from (S)-dihydroorotate (quinone route): step 1/1. Functionally, catalyzes the conversion of dihydroorotate to orotate with quinone as electron acceptor. The chain is Dihydroorotate dehydrogenase (quinone) from Rhizobium etli (strain CIAT 652).